A 695-amino-acid chain; its full sequence is Calcium-dependent serine proteinase (695 aa).

The N-terminal stretch at 1–21 (MGKSSEAWCIVLFSVFASFSA) is a signal peptide. Positions 22–136 (EPTMHGEILS…TGFAAYYAAI (115 aa)) constitute a CUB 1 domain. Intrachain disulfides connect C71–C89, C141–C153, C149–C162, and C164–C177. An EGF-like; calcium-binding domain is found at 137-178 (DVNECTDFTDVPCSHFCNNFIGGYFCSCPPEYFLHDDMRNCG). N155 is subject to (3R)-3-hydroxyasparagine. The N-linked (GlcNAc...) asparagine glycan is linked to N180. Cystine bridges form between C181–C208, C240–C257, C300–C347, C327–C360, C365–C410, and C392–C428. The CUB 2 domain maps to 181–296 (CSGNVFTALI…KGWKLRYHGD (116 aa)). Sushi domains follow at residues 298–362 (IPCP…RCQP) and 363–430 (VDCG…KCVP). N413 carries an N-linked (GlcNAc...) asparagine glycan. The 243-residue stretch at 445-687 (IFGGFPAKIQ…YKDWILQTMQ (243 aa)) folds into the Peptidase S1 domain. Active-site charge relay system residues include H482 and D536. 2 disulfides stabilise this stretch: C602/C625 and C634/C666. The active-site Charge relay system is S638.

It belongs to the peptidase S1 family. As to quaternary structure, heterodimer, consisting of heavy and light chains with disulfide bonds. The heavy chain is expected to be a regulatory subunit and the light chain contains the catalytic site. In terms of processing, the iron and 2-oxoglutarate dependent 3-hydroxylation of aspartate and asparagine is (R) stereospecific within EGF domains.

It localises to the secreted. Its subcellular location is the extracellular space. The protein resides in the extracellular matrix. Capable of degrading extracellular matrix proteins. CASP degrades type I and IV collagen and fibronectin in the presence of calcium. This is Calcium-dependent serine proteinase from Mesocricetus auratus (Golden hamster).